Reading from the N-terminus, the 190-residue chain is dTTP/UTP pyrophosphatase (190 aa).

Catalysis depends on Asp-69, which acts as the Proton acceptor.

It belongs to the Maf family. YhdE subfamily. It depends on a divalent metal cation as a cofactor.

The protein resides in the cytoplasm. The catalysed reaction is dTTP + H2O = dTMP + diphosphate + H(+). It catalyses the reaction UTP + H2O = UMP + diphosphate + H(+). In terms of biological role, nucleoside triphosphate pyrophosphatase that hydrolyzes dTTP and UTP. May have a dual role in cell division arrest and in preventing the incorporation of modified nucleotides into cellular nucleic acids. This is dTTP/UTP pyrophosphatase from Sphingopyxis alaskensis (strain DSM 13593 / LMG 18877 / RB2256) (Sphingomonas alaskensis).